A 353-amino-acid chain; its full sequence is Serine proteinase inhibitor 1 (353 aa).

It belongs to the serpin family. Poxviruses subfamily.

Its subcellular location is the host cytoplasm. Functionally, plays a role in mediating viral host range. May act to inhibit a caspase independent form of apoptosis to allow efficient virus replication in infected cells. This Vaccinia virus (strain Copenhagen) (VACV) protein is Serine proteinase inhibitor 1 (OPG208).